Consider the following 109-residue polypeptide: uncharacterized protein (109 aa).

Residues 63-85 (LFVKTFFACTYIIMLAFQVYIFL) traverse the membrane as a helical segment.

The protein localises to the membrane. This is an uncharacterized protein from Saccharomyces cerevisiae (strain ATCC 204508 / S288c) (Baker's yeast).